Here is a 179-residue protein sequence, read N- to C-terminus: Coatomer subunit zeta-2 (179 aa).

The protein belongs to the adaptor complexes small subunit family. In terms of assembly, oligomeric complex that consists of at least the alpha, beta, beta', gamma, delta, epsilon and zeta subunits.

The protein localises to the cytoplasm. It is found in the golgi apparatus membrane. The protein resides in the cytoplasmic vesicle. It localises to the COPI-coated vesicle membrane. In terms of biological role, the coatomer is a cytosolic protein complex that binds to dilysine motifs and reversibly associates with Golgi non-clathrin-coated vesicles, which further mediate biosynthetic protein transport from the ER, via the Golgi up to the trans Golgi network. Coatomer complex is required for budding from Golgi membranes, and is essential for the retrograde Golgi-to-ER transport of dilysine-tagged proteins. The zeta subunit may be involved in regulating the coat assembly and, hence, the rate of biosynthetic protein transport due to its association-dissociation properties with the coatomer complex. This is Coatomer subunit zeta-2 from Arabidopsis thaliana (Mouse-ear cress).